The chain runs to 66 residues: Beta-toxin Cbo1 (66 aa).

In terms of domain architecture, LCN-type CS-alpha/beta spans 1 to 66; sequence KEGYLVNHST…VWPLPKKTCN (66 aa). Intrachain disulfides connect C12-C65, C16-C41, C25-C46, and C29-C48. The residue at position 66 (N66) is an Asparagine amide.

Belongs to the long (4 C-C) scorpion toxin superfamily. Sodium channel inhibitor family. Beta subfamily. As to expression, expressed by the venom gland.

It is found in the secreted. Its function is as follows. Beta toxins bind voltage-independently at site-4 of sodium channels and shift the voltage of activation toward more negative potentials thereby affecting sodium channel activation and promoting spontaneous and repetitive firing. Is active on the human voltage-gated sodium channel Nav1.6/SCN8A when tested at 200 nM. In vivo, is toxic to mice when intraperitoneally injected. This chain is Beta-toxin Cbo1, found in Centruroides bonito (Scorpion).